We begin with the raw amino-acid sequence, 102 residues long: Large ribosomal subunit protein bL21 (102 aa).

It belongs to the bacterial ribosomal protein bL21 family. As to quaternary structure, part of the 50S ribosomal subunit. Contacts protein L20.

This protein binds to 23S rRNA in the presence of protein L20. The sequence is that of Large ribosomal subunit protein bL21 from Listeria monocytogenes serotype 4b (strain F2365).